The primary structure comprises 79 residues: MSNKGQLLQDPFLNALRKEHVPVSIYLVNGIKLQGNIESFDQYVVLLRNTVTQMVYKHAISTVVPARPVNFHPDAEASS.

The Sm domain maps to 10-69 (DPFLNALRKEHVPVSIYLVNGIKLQGNIESFDQYVVLLRNTVTQMVYKHAISTVVPARPV).

This sequence belongs to the Hfq family. Homohexamer.

RNA chaperone that binds small regulatory RNA (sRNAs) and mRNAs to facilitate mRNA translational regulation in response to envelope stress, environmental stress and changes in metabolite concentrations. Also binds with high specificity to tRNAs. In Burkholderia cenocepacia (strain HI2424), this protein is RNA-binding protein Hfq.